We begin with the raw amino-acid sequence, 498 residues long: Histone-lysine N-methyltransferase SET5 (498 aa).

The segment at 68-94 (KPNDGCTSRSTSCPGGKKKKKSKTDTS) is disordered. The 308-residue stretch at 108-415 (AGIRGVYFDP…PDDELVISYI (308 aa)) folds into the SET domain.

This sequence belongs to the class V-like SAM-binding methyltransferase superfamily. Histone-lysine methyltransferase family. SET5 subfamily.

It is found in the nucleus. The protein resides in the chromosome. The protein localises to the cytoplasm. It carries out the reaction L-lysyl-[histone] + S-adenosyl-L-methionine = N(6)-methyl-L-lysyl-[histone] + S-adenosyl-L-homocysteine + H(+). Histone methyltransferase that monomethylates 'Lys-5', 'Lys-8' and 'Lys-12' of histone H4 (H4K5me1, H4K8me1 and H4K12me1, respectively), thereby controlling gene expression and remodeling chromatin structures. The sequence is that of Histone-lysine N-methyltransferase SET5 (SET5) from Mycosarcoma maydis (Corn smut fungus).